Here is a 559-residue protein sequence, read N- to C-terminus: Nucleolar protein 12 (559 aa).

The interval 24–194 is disordered; the sequence is ASSAGPVQAP…AGNESDIPVH (171 aa). Residues 44-56 are compositionally biased toward basic and acidic residues; it reads QKVREPAKPKVHL. The span at 57-110 shows a compositional bias: acidic residues; that stretch reads EEDDEVLSEISEELSFEEDGPSDEDEDEDEDEENSEQEDGSGDEQEEEESEDVD. Over residues 141 to 180 the composition is skewed to basic and acidic residues; it reads NDNDDLEGKYLDKVAAEEEADRAGKRQKNDALTKTEKPAV. 2 consecutive RRM domains span residues 211-320 and 328-432; these read RTVF…SVAH and RCVF…RAKD. The disordered stretch occupies residues 429-559; the sequence is RAKDPRKTAL…RASEWKKKKN (131 aa). Basic and acidic residues-rich tracts occupy residues 516–532 and 550–559; these read EGRRASARDGLPKDLKQ and RASEWKKKKN.

It belongs to the RRM RBM34 family.

The protein localises to the nucleus. The protein resides in the nucleolus. Functionally, involved in pre-25S rRNA processing. This is Nucleolar protein 12 (NOP12) from Gibberella zeae (strain ATCC MYA-4620 / CBS 123657 / FGSC 9075 / NRRL 31084 / PH-1) (Wheat head blight fungus).